We begin with the raw amino-acid sequence, 76 residues long: Histone H2A (76 aa).

Positions 1-23 (MSGRGKTGGKARAKAKTRSSRAG) are disordered. Residue Ser2 is modified to N-acetylserine; in acipensins. At Ser2 the chain carries N-acetylserine; in histone H2A. Phosphoserine; in histone H2A is present on Ser2. N6-(2-hydroxyisobutyryl)lysine is present on Lys6. At Lys6 the chain carries N6-acetyllysine; in histone H2A. The span at 7-19 (TGGKARAKAKTRS) shows a compositional bias: basic residues. Lys10 carries the N6-(2-hydroxyisobutyryl)lysine; alternate modification. Residue Lys10 is modified to N6-lactoyllysine; alternate. Position 10 is an N6-succinyllysine (Lys10). Glycyl lysine isopeptide (Lys-Gly) (interchain with G-Cter in ubiquitin); in histone H2A cross-links involve residues Lys14 and Lys16. N6-(2-hydroxyisobutyryl)lysine; alternate is present on Lys37. An N6-(2-hydroxyisobutyryl)lysine mark is found at Lys65 and Lys66.

This sequence belongs to the histone H2A family. The nucleosome is a histone octamer containing two molecules each of H2A, H2B, H3 and H4 assembled in one H3-H4 heterotetramer and two H2A-H2B heterodimers. The octamer wraps approximately 147 bp of DNA. In terms of processing, phosphorylation on Ser-2 is enhanced during mitosis. Phosphorylation on Ser-2 directly represses transcription.

It is found in the nucleus. The protein resides in the chromosome. Its function is as follows. Core component of nucleosome. Nucleosomes wrap and compact DNA into chromatin, limiting DNA accessibility to the cellular machineries which require DNA as a template. Histones thereby play a central role in transcription regulation, DNA repair, DNA replication and chromosomal stability. DNA accessibility is regulated via a complex set of post-translational modifications of histones, also called histone code, and nucleosome remodeling. In terms of biological role, acipensins are antimicrobial peptides. Acipensins 1 and 2 have antibacterial activity against Gram-positive bacteria L.monocytogenes EGD (MIC are 1.1 uM and 1.0 uM, respectively) and S.aureus ATCC 33591 (MIC are 0.9 uM and 0.6 uM, respectively), against Gram-negative bacterium E.coli ML-35p (MIC are 0.7 uM and 0.3 uM, respectively) and antifungal activity against C.albicans 820 (MIC are 1.0 uM and 0.9 uM, respectively). Acipensin 6 has antibacterial activity against Gram-negative bacterium E.coli ML-35p (MIC=2.5 uM). Antimicrobial activity is reduced by high ionic strength. Acipensins 1, 2 and 6 have no hemolytic (up to 40 uM) or cytotoxic (up to 20 uM) effects on human cells in vitro. The sequence is that of Histone H2A from Acipenser gueldenstaedtii (Russian sturgeon).